Here is a 760-residue protein sequence, read N- to C-terminus: MMEERAAAAVASAASSCRPLGSGTAPNPTAAAPASSPAPGPGPVGKGGGGGGSPGPTAGPEPLSLPGILHFIQHEWARFEAEKARWEAERAELQAQVAFLQGERKGQENLKTDLVRRIKMLEYALKQERAKYHKLKFGTDLNQGEKKTDLSEQVSNGPVESVTLENSPLVWKEGRQLLRQYLEEVGYTDTILDMRSKRVRSLLGRSLELNGAGEPVEGAPRASPGPGGLSGGESLLVKQIEEQIKRNAAGKDGKERLGGSVLEQIPFLQNCEDEDSDEDDELDSVQHKKQRVRLPSKALVPEMEDEDEEDDSEDAINEFDFLGSGEDGEGSPDPRRCTSEGNPHELESRRVKLQGILADLRDVDGLPPKVTVPPPGTPQPRPHEGSFGFSSDVFIMDTIGGGEVSLGDLADLTVTNDNDLSCDLSDSKDAFKKTWNPKFTLRSHYDGIRSLAFHHSQSALLTASEDGTLKLWNLQKAVTAKKNAALDVEPIHAFRAHRGPVLAVTMGSNSEYCYSGGADARIHSWKIPDLNMDPYDGYDPSVLSHVLEGHGDAVWGLAFSPTSQRLASCSADGTVRIWDPSSSGPSCLCTFPMDGEHGIPTSVAFTSTEPAHVVASFRSGDTVLYDLEAGSALLTLESRGSSGPAQINQVVSHPSQPLTITAHDDRGIRFLDNRTGKSVHSMVAHLDAVTCLAVDPNGVFLMSGSHDCSLRLWSLDNKTCVQEITAHRKKHEEAIHAVACHPSKALIASAGADALAKVFV.

Residues 1–65 form a disordered region; that stretch reads MMEERAAAAV…PTAGPEPLSL (65 aa). The span at 7-35 shows a compositional bias: low complexity; sequence AAAVASAASSCRPLGSGTAPNPTAAAPAS. Over residues 43 to 54 the composition is skewed to gly residues; it reads PVGKGGGGGGSP. Position 53 is a phosphoserine (Ser53). Positions 69-136 form a coiled coil; sequence LHFIQHEWAR…QERAKYHKLK (68 aa). The segment at 71–79 is caveolin-binding; that stretch reads FIQHEWARF. Residues 165–182 are calmodulin-binding; the sequence is ENSPLVWKEGRQLLRQYL. Residues Ser206, Ser223, and Ser276 each carry the phosphoserine modification. Disordered regions lie at residues 210 to 233 and 272 to 346; these read NGAG…SGGE and EDED…PHEL. 2 stretches are compositionally biased toward acidic residues: residues 272–283 and 302–317; these read EDEDSDEDDELD and EMED…DAIN. The segment covering 332 to 346 has biased composition (basic and acidic residues); the sequence is PDPRRCTSEGNPHEL. 7 WD repeats span residues 443–482, 496–535, 549–588, 595–635, 642–681, 684–723, and 730–759; these read SHYD…TAKK, AHRG…MDPY, GHGD…PSCL, GEHG…ALLT, SGPA…SVHS, AHLD…CVQE, and KHEE…AKVF.

The protein belongs to the WD repeat striatin family. Part of the core of STRIPAK complexes composed of PP2A catalytic and scaffolding subunits, the striatins (PP2A regulatory subunits), the striatin-associated proteins MOB4, STRIP1 and STRIP2, PDCD10 and members of the STE20 kinases, such as STK24 and STK26. Interacts with CTTNBP2NL. Mainly expressed in brain but is also expressed at low levels in the kidney.

It localises to the cytoplasm. The protein localises to the membrane. The protein resides in the cell projection. It is found in the dendritic spine. Functionally, calmodulin-binding scaffolding protein which is the center of the striatin-interacting phosphatase and kinase (STRIPAK) complexes. STRIPAK complexes have critical roles in protein (de)phosphorylation and are regulators of multiple signaling pathways including Hippo, MAPK, nuclear receptor and cytoskeleton remodeling. Different types of STRIPAK complexes are involved in a variety of biological processes such as cell growth, differentiation, apoptosis, metabolism and immune regulation. Key regulator of the expanded Hippo signaling pathway by interacting and allowing the inhibition of MAP4K kinases by the STRIPAK complex. In Mus musculus (Mouse), this protein is Striatin-4 (Strn4).